A 372-amino-acid polypeptide reads, in one-letter code: Putative KilA-N domain-containing protein L32 (372 aa).

Positions Met-1–Arg-12 are enriched in basic residues. The tract at residues Met-1 to Phe-129 is disordered. A compositionally biased stretch (basic and acidic residues) spans Arg-14–Arg-36. A compositionally biased stretch (basic residues) spans Ser-37–Ser-53. Residues Glu-79–Ser-120 are compositionally biased toward acidic residues. In terms of domain architecture, KilA-N spans Lys-151–Trp-255.

This Acanthamoeba polyphaga (Amoeba) protein is Putative KilA-N domain-containing protein L32.